Reading from the N-terminus, the 192-residue chain is Superoxide dismutase [Fe] (192 aa).

Residues His26, His73, Asp157, and His161 each coordinate Fe cation.

It belongs to the iron/manganese superoxide dismutase family. In terms of assembly, homodimer. Requires Fe cation as cofactor.

It catalyses the reaction 2 superoxide + 2 H(+) = H2O2 + O2. Its function is as follows. Destroys superoxide anion radicals which are normally produced within the cells and which are toxic to biological systems. This is Superoxide dismutase [Fe] from Pseudoalteromonas translucida (strain TAC 125).